The chain runs to 365 residues: Outer capsid protein sigma-3 (365 aa).

The CCHC-type zinc finger occupies 51–73 (CMHCLGVVGSLQRKLKHLPHHRC).

Belongs to the orthoreovirus sigma-3 protein family. As to quaternary structure, heterohexamer of three sigma-3 and three Mu-1 proteins. The RNA-binding form is probably a homodimer. Post-translationally, cleaved during virus the endosomal proteolytic disassembly of the outer capsid.

The protein resides in the virion. It localises to the host cytoplasm. Its subcellular location is the host nucleus. Its function is as follows. Stimulates translation by blocking the activation of the dsRNA-dependent protein kinase EIF2AK2/PKR, thereby inhibiting the host interferon response. Sigma3 prevents the activation of EIF2AK2 by competing with the kinase for dsRNA-binding. The viral outer shell polypeptides, of which sigma-3 is one, impose structural constraints that prevent elongation of nascent transcripts by the RNA-dependent RNA polymerase lambda-3. The protein is Outer capsid protein sigma-3 (S4) of Reovirus type 3 (strain Dearing) (T3D).